A 345-amino-acid polypeptide reads, in one-letter code: Probable dual-specificity RNA methyltransferase RlmN (345 aa).

The Proton acceptor role is filled by glutamate 90. A Radical SAM core domain is found at 96-327 (QSYGNSVCVT…CIVRREFGHD (232 aa)). An intrachain disulfide couples cysteine 103 to cysteine 332. Residues cysteine 110, cysteine 114, and cysteine 117 each coordinate [4Fe-4S] cluster. S-adenosyl-L-methionine-binding positions include 160–161 (GE), serine 192, 215–217 (SLH), and asparagine 291. Cysteine 332 acts as the S-methylcysteine intermediate in catalysis.

It belongs to the radical SAM superfamily. RlmN family. [4Fe-4S] cluster serves as cofactor.

The protein localises to the cytoplasm. The catalysed reaction is adenosine(2503) in 23S rRNA + 2 reduced [2Fe-2S]-[ferredoxin] + 2 S-adenosyl-L-methionine = 2-methyladenosine(2503) in 23S rRNA + 5'-deoxyadenosine + L-methionine + 2 oxidized [2Fe-2S]-[ferredoxin] + S-adenosyl-L-homocysteine. It catalyses the reaction adenosine(37) in tRNA + 2 reduced [2Fe-2S]-[ferredoxin] + 2 S-adenosyl-L-methionine = 2-methyladenosine(37) in tRNA + 5'-deoxyadenosine + L-methionine + 2 oxidized [2Fe-2S]-[ferredoxin] + S-adenosyl-L-homocysteine. Specifically methylates position 2 of adenine 2503 in 23S rRNA and position 2 of adenine 37 in tRNAs. This is Probable dual-specificity RNA methyltransferase RlmN from Spiroplasma citri.